Reading from the N-terminus, the 394-residue chain is MRTQVGIIGAGPAGLLLSHLLYLQGIESIIIENRTREEIEGTIRAGVLEQGTVDLMNQMGVGARMMKEGHFHEGFELRFNGRGHRINVHELTGGKYVTVYAQHEVIKDLVAARLQTGGQIHFNVGDVSLHDVDTSSPKIRFRPNKDGELQEIECDFIAGCDGFRGPSRPAIPQSVRKEYQKVYPFSWLGILVEAPPSAHELIYANHERGFALVSTRSPQIQRLYLQVDAQDHIDNWSDDRIWSELHARLETRDGFKLLEGPIFQKGIVSMRSFVCDPMQHGRLFLAGDAAHIVPPTGAKGLNLAAADVQVLARGLEAYYKAGKMEILNRCTEICLRRIWKAERFSWFMTTMLHRDQGHTPFERGIQLAELDYVTSSRAASTSLAENYIGLPMEF.

FAD is bound by residues Glu32, Thr42 to Val47, and Gln102. Substrate-binding positions include Tyr203, Ser214–Arg216, and Tyr224. Asp288 provides a ligand contact to FAD. A substrate-binding site is contributed by Pro295. Leu301–Asn302 contributes to the FAD binding site.

This sequence belongs to the aromatic-ring hydroxylase family. Requires FAD as cofactor.

The catalysed reaction is 4-hydroxybenzoate + NADH + O2 + H(+) = 3,4-dihydroxybenzoate + NAD(+) + H2O. The enzyme catalyses 4-hydroxybenzoate + NADPH + O2 + H(+) = 3,4-dihydroxybenzoate + NADP(+) + H2O. Functionally, involved in the degradation of 4-hydroxybenzoate (4HB) via the protocatechuate (PCA) 2,3-cleavage pathway. Catalyzes the conversion of 4HB into 2-hydroxypenta-2,4-dienoate (HPD). It is highly specific for 4-hydroxybenzoate, and is able to utilize both NADH and NADPH as electron donors at approximately equal rates. The sequence is that of 4-hydroxybenzoate 3-monooxygenase (NAD(P)H) (praI) from Paenibacillus sp.